The chain runs to 168 residues: MKLTSKGRYAVTAMLDVALHSQQNPVPLADISERQGISLSYLEQLFSKLRKAGLVASVRGPGGGYRLGADAHSIAIGTVIAAVDESVDATKCQGKGDCQGGTRCLTHTLWRDLSSRISDFLNNITLGELMTDNEVLEISDRQDIGLAVTHGLSNKNTTAAPIGVNVRS.

The HTH rrf2-type domain maps to 2-131; sequence KLTSKGRYAV…NNITLGELMT (130 aa). A DNA-binding region (H-T-H motif) is located at residues 28 to 51; it reads LADISERQGISLSYLEQLFSKLRK. Residues Cys92, Cys98, and Cys104 each contribute to the [2Fe-2S] cluster site.

[2Fe-2S] cluster serves as cofactor.

Regulates the transcription of several operons and genes involved in the biogenesis of Fe-S clusters and Fe-S-containing proteins. In Vibrio parahaemolyticus serotype O3:K6 (strain RIMD 2210633), this protein is HTH-type transcriptional regulator IscR.